We begin with the raw amino-acid sequence, 414 residues long: Secernin-1 (414 aa).

This sequence belongs to the peptidase C69 family. Secernin subfamily.

It is found in the cytoplasm. Functionally, regulates exocytosis in mast cells. Increases both the extent of secretion and the sensitivity of mast cells to stimulation with calcium. The chain is Secernin-1 (Scrn1) from Mus musculus (Mouse).